The sequence spans 409 residues: Polyadenylate-binding protein RBP45 (409 aa).

Residues 1 to 83 (MMPQSGVAQP…PSPTGNPNEV (83 aa)) form a disordered region. Over residues 19-81 (QHQYQQQAPP…PNPSPTGNPN (63 aa)) the composition is skewed to low complexity. 2 RRM domains span residues 84-164 (RSLW…WASL) and 176-255 (HTIF…PAAN). The tract at residues 251-280 (GPAANKKPVGTPQKATYQNPQATQGESDPN) is disordered. A compositionally biased stretch (polar residues) spans 263–280 (QKATYQNPQATQGESDPN). In terms of domain architecture, RRM 3 spans 282 to 354 (TTIFVGGLDP…QSIRLSWGRS (73 aa)).

The protein belongs to the polyadenylate-binding RBP45 family. Interacts with the poly(A) tail of mRNA in nucleus. Constitutively expressed in leaves, roots, and stems.

Its subcellular location is the nucleus. In terms of biological role, heterogeneous nuclear ribonucleoprotein (hnRNP)-protein binding the poly(A) tail of mRNA and probably involved in some steps of pre-mRNA maturation. The sequence is that of Polyadenylate-binding protein RBP45 (RBP45) from Nicotiana plumbaginifolia (Leadwort-leaved tobacco).